Here is a 58-residue protein sequence, read N- to C-terminus: UPF0339 protein MA_3316 (58 aa).

The protein belongs to the UPF0339 family.

The sequence is that of UPF0339 protein MA_3316 from Methanosarcina acetivorans (strain ATCC 35395 / DSM 2834 / JCM 12185 / C2A).